We begin with the raw amino-acid sequence, 1053 residues long: Polyphosphate kinase (1053 aa).

3 disordered regions span residues Leu23–Glu155, Val200–Lys245, and Asn302–Pro328. Over residues Ser32–Ser50 the composition is skewed to low complexity. The span at Val81–Ala102 shows a compositional bias: acidic residues. Positions Thr143–Glu155 are enriched in polar residues. The segment covering Ser215–Ser239 has biased composition (low complexity). The active-site Phosphohistidine intermediate is His800. A disordered region spans residues Arg1027–Lys1053. A compositionally biased stretch (polar residues) spans Gln1036–Lys1046.

The protein belongs to the polyphosphate kinase 1 (PPK1) family. Hexamer. May form higher oligomeric structures in the presence of ATP.

It is found in the vesicle. It carries out the reaction [phosphate](n) + ATP = [phosphate](n+1) + ADP. Functionally, catalyzes the reversible transfer of the terminal phosphate of ATP to form a long-chain polyphosphate (polyP). Produces polyP in a broad range of chain lengths (50-300 Pi residues). Involved in development (growth and fruiting body formation), sporulation, phagocytosis, cell division and the late stages of cytokinesis. The sequence is that of Polyphosphate kinase (ppkA) from Dictyostelium discoideum (Social amoeba).